The primary structure comprises 279 residues: Ribosomal RNA small subunit methyltransferase A (279 aa).

The S-adenosyl-L-methionine site is built by His-12, Leu-14, Gly-39, Glu-60, Asp-81, and Asn-118.

Belongs to the class I-like SAM-binding methyltransferase superfamily. rRNA adenine N(6)-methyltransferase family. RsmA subfamily.

Its subcellular location is the cytoplasm. It catalyses the reaction adenosine(1518)/adenosine(1519) in 16S rRNA + 4 S-adenosyl-L-methionine = N(6)-dimethyladenosine(1518)/N(6)-dimethyladenosine(1519) in 16S rRNA + 4 S-adenosyl-L-homocysteine + 4 H(+). Specifically dimethylates two adjacent adenosines (A1518 and A1519) in the loop of a conserved hairpin near the 3'-end of 16S rRNA in the 30S particle. May play a critical role in biogenesis of 30S subunits. The protein is Ribosomal RNA small subunit methyltransferase A of Polaromonas naphthalenivorans (strain CJ2).